The following is a 359-amino-acid chain: 3-dehydroquinate synthase (359 aa).

NAD(+) is bound by residues 71 to 76, 105 to 109, 129 to 130, Lys142, Lys151, and 169 to 172; these read DGEQFK, GVIGD, TT, and CLQT. The Zn(2+) site is built by Glu184, His247, and His264.

Belongs to the sugar phosphate cyclases superfamily. Dehydroquinate synthase family. Requires Co(2+) as cofactor. Zn(2+) serves as cofactor. It depends on NAD(+) as a cofactor.

Its subcellular location is the cytoplasm. It carries out the reaction 7-phospho-2-dehydro-3-deoxy-D-arabino-heptonate = 3-dehydroquinate + phosphate. Its pathway is metabolic intermediate biosynthesis; chorismate biosynthesis; chorismate from D-erythrose 4-phosphate and phosphoenolpyruvate: step 2/7. In terms of biological role, catalyzes the conversion of 3-deoxy-D-arabino-heptulosonate 7-phosphate (DAHP) to dehydroquinate (DHQ). The chain is 3-dehydroquinate synthase from Shewanella sp. (strain ANA-3).